A 202-amino-acid polypeptide reads, in one-letter code: Glycerol-3-phosphate acyltransferase (202 aa).

Helical transmembrane passes span methionine 2–isoleucine 22, phenylalanine 54–phenylalanine 74, phenylalanine 85–phenylalanine 105, alanine 118–leucine 138, leucine 140–glycine 160, and leucine 162–phenylalanine 182.

It belongs to the PlsY family. In terms of assembly, probably interacts with PlsX.

The protein resides in the cell membrane. The catalysed reaction is an acyl phosphate + sn-glycerol 3-phosphate = a 1-acyl-sn-glycero-3-phosphate + phosphate. The protein operates within lipid metabolism; phospholipid metabolism. Functionally, catalyzes the transfer of an acyl group from acyl-phosphate (acyl-PO(4)) to glycerol-3-phosphate (G3P) to form lysophosphatidic acid (LPA). This enzyme utilizes acyl-phosphate as fatty acyl donor, but not acyl-CoA or acyl-ACP. This Staphylococcus carnosus (strain TM300) protein is Glycerol-3-phosphate acyltransferase.